The sequence spans 392 residues: MSTRESFNPESYELDKSFRLTRFTELKGTGCKVPQDVLQKLLESLQENHFQEDEQFLGAVMPRLGIGMDTCVIPLRHGGLSLVQTTDYIYPIVDDPYMMGRIACANVLSDLYAMGVTECDNMLMLLGVSNKMTDRERDKVMPLIIQGFKDAAEEAGTSVTGGQTVLNPWIVLGGVATTVCQPNEFIMPDNAVPGDVLVLTKPLGTQVAVAVHQWLDIPEKWNKIKLVVTQEDVELAYQEAMMNMARLNRTAAGLMHTFNAHAATDITGFGILGHAQNLAKQQRNEVSFVIHNLPVLAKMAAVSKACGNMFGLMHGTCPETSGGLLICLPREQAARFCAEIKSPKYGEGHQAWIIGIVEKGNRTARIIDKPRIIEVAPQVATQNVNPTPGATS.

Residue S2 is modified to N-acetylserine. C31 is an active-site residue. Residues K32, 67-69, D87, D110, and 161-164 each bind ATP; these read GMD and GGQT. Residue D69 participates in Mg(2+) binding. D110 is a binding site for Mg(2+). D265 provides a ligand contact to Mg(2+).

The protein belongs to the selenophosphate synthase 1 family. Class II subfamily. Homodimer. Heterodimer with isoform 3. In terms of assembly, homodimer. Heterodimer with isoform 4. As to quaternary structure, homodimer. Heterodimer with isoform 1. Homodimer. Heterodimer with isoform 2. Requires Mg(2+) as cofactor. Gradually expressed during the cell cycle until G2/M phase and then decreases. In terms of tissue distribution, gradually expressed during the cell cycle until S phase and then decreases.

The protein localises to the cell membrane. The protein resides in the nucleus membrane. It localises to the cytoplasm. The enzyme catalyses hydrogenselenide + ATP + H2O = selenophosphate + AMP + phosphate + 2 H(+). Activated by phosphate ions and by potassium ions. In terms of biological role, synthesizes selenophosphate from selenide and ATP. This is Selenide, water dikinase 1 (SEPHS1) from Homo sapiens (Human).